We begin with the raw amino-acid sequence, 557 residues long: Glutamine--tRNA ligase (557 aa).

Positions 42 to 52 match the 'HIGH' region motif; sequence PEPNGYLHIGH. ATP-binding positions include 43–45 and 49–55; these read EPN and HIGHAKS. 2 residues coordinate L-glutamine: Asp-75 and Tyr-220. Residues Thr-239 and 270 to 271 each bind ATP; that span reads RL. Positions 277-281 match the 'KMSKS' region motif; sequence LTSKR.

This sequence belongs to the class-I aminoacyl-tRNA synthetase family. As to quaternary structure, monomer.

Its subcellular location is the cytoplasm. The enzyme catalyses tRNA(Gln) + L-glutamine + ATP = L-glutaminyl-tRNA(Gln) + AMP + diphosphate. The chain is Glutamine--tRNA ligase from Haemophilus influenzae (strain 86-028NP).